A 310-amino-acid chain; its full sequence is Melanocyte-stimulating hormone receptor (310 aa).

The Extracellular segment spans residues 1–37 (MPMQGAQRKLLGSLNSTPTATSNLGLAANRTGAPCLE). Residue Asn29 is glycosylated (N-linked (GlcNAc...) asparagine). Residues 38–63 (LPIPDGLFLSLGLVSLVENVLVVAAI) traverse the membrane as a helical segment. Residues 64–72 (AKNRNLHSS) lie on the Cytoplasmic side of the membrane. Residues 73–93 (MYCFICCLALSDLLVSGSNML) form a helical membrane-spanning segment. Topologically, residues 94–110 (EAGVLATRASVVQQLHN) are extracellular. The helical transmembrane segment at 111–132 (TIDVLTCSSMLCSLCFLGAIAV) threads the bilayer. Topologically, residues 133 to 155 (DRYISIFYALRYHSIMTLPRAQR) are cytoplasmic. A helical transmembrane segment spans residues 156–175 (AVAAIWVASVLSSTLFITYY). Over 176–183 (DHAAVLLC) the chain is Extracellular. A helical membrane pass occupies residues 184 to 203 (LVVFFLAMLVLMAVLYVHML). Over 204-232 (AWACQHAQGIIRLHKRQPPAHKGFGLRGA) the chain is Cytoplasmic. A helical transmembrane segment spans residues 233-258 (ATLTILLGIFFLCWGPFFLRLTLVVF). Over 259-271 (CPQHLTCNCIFKN) the chain is Extracellular. Residues 272 to 292 (FKVFLTLIICNTIIDPLIYAF) form a helical membrane-spanning segment. The Cytoplasmic segment spans residues 293-310 (RSQELRRTLKEVLGRGRW).

Belongs to the G-protein coupled receptor 1 family. Interacts with MGRN1, but does not undergo MGRN1-mediated ubiquitination; this interaction competes with GNAS-binding and thus inhibits agonist-induced cAMP production. Interacts with OPN3; the interaction results in a decrease in MC1R-mediated cAMP signaling and ultimately a decrease in melanin production in melanocytes.

The protein localises to the cell membrane. Functionally, receptor for MSH (alpha, beta and gamma) and ACTH. The activity of this receptor is mediated by G proteins which activate adenylate cyclase. Mediates melanogenesis, the production of eumelanin (black/brown) and phaeomelanin (red/yellow), via regulation of cAMP signaling in melanocytes. The chain is Melanocyte-stimulating hormone receptor (MC1R) from Leontopithecus chrysomelas (Golden-headed lion tamarin).